We begin with the raw amino-acid sequence, 439 residues long: Kinesin-like protein KIN-13 (439 aa).

Position 1-5 (1-5) interacts with ATP; the sequence is GSGKS. A Kinesin motor domain is found at 1-240; that stretch reads GSGKSFTMMH…LRYADRVKEL (240 aa).

The protein belongs to the TRAFAC class myosin-kinesin ATPase superfamily. Kinesin family. KIN-13 subfamily. In terms of assembly, interacts with PLK. In terms of processing, phosphorylated by PLK.

It is found in the cytoplasm. The protein resides in the cytoskeleton. Its subcellular location is the cell projection. The protein localises to the cilium. It localises to the flagellum. It is found in the flagellum basal body. The protein resides in the flagellum axoneme. Its subcellular location is the spindle. The protein localises to the chromosome. It localises to the centromere. It is found in the kinetochore. Involved in cell cycle. Involved in formation of flagella, regulation of flagellar length, and formation of median bodies during interphase. Regulates flagellar length in all eight distal flagellar tips by promoting disassembly of the microtubules. Disassembles microtubules at the distal flagellar tips in a length-dependent manner in order to maintain different equilibrium lengths of the four flagellar pairs. Regulates interphase and mitotic microtubule dynamics. Regulates microtubule disassembly dynamics of the dual mitotic spindles and the median body. The polypeptide is Kinesin-like protein KIN-13 (Giardia intestinalis (Giardia lamblia)).